The chain runs to 236 residues: Small ribosomal subunit protein uS2c (236 aa).

The protein belongs to the universal ribosomal protein uS2 family.

The protein localises to the plastid. It is found in the chloroplast. This Saccharum hybrid (Sugarcane) protein is Small ribosomal subunit protein uS2c (rps2).